Reading from the N-terminus, the 1966-residue chain is Alpha-protein kinase 2 (1966 aa).

6 disordered regions span residues 23-65 (NSSP…STGL), 211-231 (AMNS…DTDK), 1211-1259 (LKSN…AYSD), 1303-1365 (SLPN…EGAG), 1386-1423 (KTQG…VNGK), and 1437-1463 (NKPV…SVRP). Positions 211 to 227 (AMNSEQSPDQPFSIASN) are enriched in polar residues. Positions 1211 to 1221 (LKSNKKSSSSD) are enriched in low complexity. A compositionally biased stretch (basic and acidic residues) spans 1325–1342 (SDGKMRSKHKEKPDDKQQ). The segment covering 1388 to 1397 (QGKKKKKHVQ) has biased composition (basic residues). The segment covering 1401–1417 (PKPENDAPTDVRSESRQ) has biased composition (basic and acidic residues). In terms of domain architecture, Ig-like spans 1577-1659 (PRVVSEIQAD…SLIVANISVS (83 aa)). Cysteine 1599 and cysteine 1649 are joined by a disulfide. Residues 1702 to 1934 (KEDFLSDQYF…YCELLGLVSL (233 aa)) enclose the Alpha-type protein kinase domain. Positions 1937–1966 (KPKRTVAPPKPKTQPVPKKKTFGPVLNAKS) are disordered.

This sequence belongs to the protein kinase superfamily. Alpha-type protein kinase family. ALPK subfamily. Expressed in developing cardiac tissue.

The protein resides in the basolateral cell membrane. It carries out the reaction L-seryl-[protein] + ATP = O-phospho-L-seryl-[protein] + ADP + H(+). The enzyme catalyses L-threonyl-[protein] + ATP = O-phospho-L-threonyl-[protein] + ADP + H(+). Protein kinase that recognizes phosphorylation sites in which the surrounding peptides have an alpha-helical conformation. Regulates cardiac development and cardiomyocyte differentiation by negatively regulating Wnt/beta-catenin signaling. In Danio rerio (Zebrafish), this protein is Alpha-protein kinase 2 (alpk2).